The following is a 115-amino-acid chain: MRVGCDIIAISRIEKIHSRHGKNFLDKFLSPKEQILIKNPATLAGLWAAKEAASKALGVGICELCSFFDIEISKDEKNAPKLKYSQKITKDFNITQTSLSISHDNGFAIAIVAIV.

Mg(2+)-binding residues include aspartate 6 and glutamate 51.

This sequence belongs to the P-Pant transferase superfamily. AcpS family. Mg(2+) serves as cofactor.

The protein localises to the cytoplasm. It catalyses the reaction apo-[ACP] + CoA = holo-[ACP] + adenosine 3',5'-bisphosphate + H(+). Transfers the 4'-phosphopantetheine moiety from coenzyme A to a Ser of acyl-carrier-protein. The sequence is that of Holo-[acyl-carrier-protein] synthase from Campylobacter jejuni subsp. jejuni serotype O:23/36 (strain 81-176).